The following is a 62-amino-acid chain: MSFLKKSLLLVLFLGLVSFSICEEEKRETEEEENEDDMDEESEEKKRESPDRPPGFSPFRVD.

The signal sequence occupies residues 1-22 (MSFLKKSLLLVLFLGLVSFSIC). The propeptide occupies 23 to 51 (EEEKRETEEEENEDDMDEESEEKKRESPD). A disordered region spans residues 24–62 (EEKRETEEEENEDDMDEESEEKKRESPDRPPGFSPFRVD). The span at 30-42 (EEEENEDDMDEES) shows a compositional bias: acidic residues.

This sequence belongs to the frog skin active peptide (FSAP) family. Bradykinin-related peptide subfamily. Expressed by the skin glands.

The protein localises to the secreted. Induces relaxation of rat smooth muscle from tail artery and contraction of that from ileum, urinary bladder and uterus. Binds to both bradykinin receptor B1 (BDKRB1) and B2 (BDKRB2). The protein is [Ser6, Val10, Asp11]-phyllokinin of Agalychnis spurrelli (Gliding leaf frog).